Here is a 178-residue protein sequence, read N- to C-terminus: Large ribosomal subunit protein uL6 (178 aa).

This sequence belongs to the universal ribosomal protein uL6 family. As to quaternary structure, part of the 50S ribosomal subunit.

Its function is as follows. This protein binds to the 23S rRNA, and is important in its secondary structure. It is located near the subunit interface in the base of the L7/L12 stalk, and near the tRNA binding site of the peptidyltransferase center. The protein is Large ribosomal subunit protein uL6 of Staphylococcus aureus (strain Mu3 / ATCC 700698).